Consider the following 440-residue polypeptide: Serine hydroxymethyltransferase (440 aa).

(6S)-5,6,7,8-tetrahydrofolate contacts are provided by residues Leu-119 and Gly-123–Leu-125. An N6-(pyridoxal phosphate)lysine modification is found at Lys-228. Ser-370 to Phe-372 contacts (6S)-5,6,7,8-tetrahydrofolate.

The protein belongs to the SHMT family. In terms of assembly, homodimer. Pyridoxal 5'-phosphate serves as cofactor.

The protein localises to the cytoplasm. It catalyses the reaction (6R)-5,10-methylene-5,6,7,8-tetrahydrofolate + glycine + H2O = (6S)-5,6,7,8-tetrahydrofolate + L-serine. Its pathway is one-carbon metabolism; tetrahydrofolate interconversion. It participates in amino-acid biosynthesis; glycine biosynthesis; glycine from L-serine: step 1/1. Its function is as follows. Catalyzes the reversible interconversion of serine and glycine with tetrahydrofolate (THF) serving as the one-carbon carrier. This reaction serves as the major source of one-carbon groups required for the biosynthesis of purines, thymidylate, methionine, and other important biomolecules. Also exhibits THF-independent aldolase activity toward beta-hydroxyamino acids, producing glycine and aldehydes, via a retro-aldol mechanism. This chain is Serine hydroxymethyltransferase, found in Chlorobium luteolum (strain DSM 273 / BCRC 81028 / 2530) (Pelodictyon luteolum).